The chain runs to 186 residues: uncharacterized protein (186 aa).

This is an uncharacterized protein from Saccharomyces cerevisiae (strain ATCC 204508 / S288c) (Baker's yeast).